Here is a 118-residue protein sequence, read N- to C-terminus: Large ribosomal subunit protein bL17 (118 aa).

This sequence belongs to the bacterial ribosomal protein bL17 family. In terms of assembly, part of the 50S ribosomal subunit. Contacts protein L32.

In Campylobacter fetus subsp. fetus (strain 82-40), this protein is Large ribosomal subunit protein bL17.